Here is a 155-residue protein sequence, read N- to C-terminus: Large ribosomal subunit protein uL22c (155 aa).

This sequence belongs to the universal ribosomal protein uL22 family. Part of the 50S ribosomal subunit.

It is found in the plastid. The protein resides in the chloroplast. In terms of biological role, this protein binds specifically to 23S rRNA. The globular domain of the protein is located near the polypeptide exit tunnel on the outside of the subunit, while an extended beta-hairpin is found that lines the wall of the exit tunnel in the center of the 70S ribosome. This is Large ribosomal subunit protein uL22c (rpl22) from Atropa belladonna (Belladonna).